Reading from the N-terminus, the 281-residue chain is Replication protein repL (281 aa).

Essential for L-replicon function. Necessary for initiation of DNA replication from the L-replicon at oriL. This is Replication protein repL (repL) from Enterobacteriaceae (Bacteriophage P1).